Here is a 310-residue protein sequence, read N- to C-terminus: Aspartate carbamoyltransferase catalytic subunit 3 (310 aa).

Carbamoyl phosphate contacts are provided by Arg-55 and Thr-56. Lys-85 provides a ligand contact to L-aspartate. Residues Arg-106, His-134, and Gln-137 each contribute to the carbamoyl phosphate site. L-aspartate-binding residues include Arg-167 and Arg-228. The carbamoyl phosphate site is built by Leu-266 and Pro-267.

This sequence belongs to the aspartate/ornithine carbamoyltransferase superfamily. ATCase family. As to quaternary structure, heterododecamer (2C3:3R2) of six catalytic PyrB chains organized as two trimers (C3), and six regulatory PyrI chains organized as three dimers (R2).

The catalysed reaction is carbamoyl phosphate + L-aspartate = N-carbamoyl-L-aspartate + phosphate + H(+). The protein operates within pyrimidine metabolism; UMP biosynthesis via de novo pathway; (S)-dihydroorotate from bicarbonate: step 2/3. Functionally, catalyzes the condensation of carbamoyl phosphate and aspartate to form carbamoyl aspartate and inorganic phosphate, the committed step in the de novo pyrimidine nucleotide biosynthesis pathway. In Shewanella halifaxensis (strain HAW-EB4), this protein is Aspartate carbamoyltransferase catalytic subunit 3.